A 234-amino-acid polypeptide reads, in one-letter code: Purine nucleoside phosphorylase DeoD-type (234 aa).

Position 4 (His4) interacts with a purine D-ribonucleoside. Phosphate contacts are provided by residues Gly20, Arg24, Arg43, and 87-90 (RIGT). Residues 179–181 (EME) and 203–204 (SD) contribute to the a purine D-ribonucleoside site. The active-site Proton donor is Asp204.

This sequence belongs to the PNP/UDP phosphorylase family. Homohexamer; trimer of homodimers.

It catalyses the reaction a purine D-ribonucleoside + phosphate = a purine nucleobase + alpha-D-ribose 1-phosphate. The catalysed reaction is a purine 2'-deoxy-D-ribonucleoside + phosphate = a purine nucleobase + 2-deoxy-alpha-D-ribose 1-phosphate. In terms of biological role, catalyzes the reversible phosphorolytic breakdown of the N-glycosidic bond in the beta-(deoxy)ribonucleoside molecules, with the formation of the corresponding free purine bases and pentose-1-phosphate. In Helicobacter pylori (strain Shi470), this protein is Purine nucleoside phosphorylase DeoD-type.